The sequence spans 892 residues: DNA ligase (892 aa).

The tract at residues 1-23 is disordered; that stretch reads MTMTNRDDSEQLAWDFDAPESDG. NAD(+) contacts are provided by residues 99-103, 148-149, and glutamate 182; these read DAAYD and SL. Lysine 184 acts as the N6-AMP-lysine intermediate in catalysis. Arginine 205, glutamate 244, lysine 369, and lysine 393 together coordinate NAD(+). Residues cysteine 490, cysteine 493, cysteine 509, and cysteine 515 each coordinate Zn(2+). Residues 810–892 form the BRCT domain; that stretch reads GLPQTLAGKT…KQLLDTGTVE (83 aa).

It belongs to the NAD-dependent DNA ligase family. LigA subfamily. Mg(2+) is required as a cofactor. Requires Mn(2+) as cofactor.

The enzyme catalyses NAD(+) + (deoxyribonucleotide)n-3'-hydroxyl + 5'-phospho-(deoxyribonucleotide)m = (deoxyribonucleotide)n+m + AMP + beta-nicotinamide D-nucleotide.. In terms of biological role, DNA ligase that catalyzes the formation of phosphodiester linkages between 5'-phosphoryl and 3'-hydroxyl groups in double-stranded DNA using NAD as a coenzyme and as the energy source for the reaction. It is essential for DNA replication and repair of damaged DNA. This chain is DNA ligase, found in Bifidobacterium adolescentis (strain ATCC 15703 / DSM 20083 / NCTC 11814 / E194a).